A 231-amino-acid chain; its full sequence is 2-C-methyl-D-erythritol 4-phosphate cytidylyltransferase (231 aa).

It belongs to the IspD/TarI cytidylyltransferase family. IspD subfamily.

It carries out the reaction 2-C-methyl-D-erythritol 4-phosphate + CTP + H(+) = 4-CDP-2-C-methyl-D-erythritol + diphosphate. It functions in the pathway isoprenoid biosynthesis; isopentenyl diphosphate biosynthesis via DXP pathway; isopentenyl diphosphate from 1-deoxy-D-xylulose 5-phosphate: step 2/6. Its function is as follows. Catalyzes the formation of 4-diphosphocytidyl-2-C-methyl-D-erythritol from CTP and 2-C-methyl-D-erythritol 4-phosphate (MEP). This is 2-C-methyl-D-erythritol 4-phosphate cytidylyltransferase from Shewanella pealeana (strain ATCC 700345 / ANG-SQ1).